The chain runs to 99 residues: DNA-binding protein Fis (99 aa).

Residues 75 to 94 (QTRAATMLGINRGTLRKKLK) constitute a DNA-binding region (H-T-H motif).

It belongs to the transcriptional regulatory Fis family. Homodimer.

In terms of biological role, activates ribosomal RNA transcription. Plays a direct role in upstream activation of rRNA promoters. The polypeptide is DNA-binding protein Fis (Pasteurella multocida (strain Pm70)).